An 891-amino-acid chain; its full sequence is Alanine--tRNA ligase (891 aa).

The Zn(2+) site is built by His564, His568, Cys678, and His682.

Belongs to the class-II aminoacyl-tRNA synthetase family. Requires Zn(2+) as cofactor.

The protein resides in the cytoplasm. The catalysed reaction is tRNA(Ala) + L-alanine + ATP = L-alanyl-tRNA(Ala) + AMP + diphosphate. In terms of biological role, catalyzes the attachment of alanine to tRNA(Ala) in a two-step reaction: alanine is first activated by ATP to form Ala-AMP and then transferred to the acceptor end of tRNA(Ala). Also edits incorrectly charged Ser-tRNA(Ala) and Gly-tRNA(Ala) via its editing domain. This chain is Alanine--tRNA ligase, found in Nitrobacter hamburgensis (strain DSM 10229 / NCIMB 13809 / X14).